The sequence spans 173 residues: Nanos homolog 3 (173 aa).

Residues Lys-23–Ser-51 are disordered. The segment at Leu-57–Leu-111 adopts a Nanos-type zinc-finger fold. 8 residues coordinate Zn(2+): Cys-58, Cys-61, His-74, Cys-85, Cys-93, Cys-96, His-104, and Cys-109. 2 short sequence motifs (C2HC) span residues Cys-58–Cys-85 and Cys-93–Cys-109. The disordered stretch occupies residues Thr-123–Thr-173. Basic and acidic residues predominate over residues Val-133–His-145. The segment covering Ser-161–Thr-173 has biased composition (low complexity).

It belongs to the nanos family. Binds mRNA from germ cells. Interacts with PUM2. Ovary, testis and brain (at protein level). In the ovaries, expressed during multiple stages of oogenesis, including primordial, primary, secondary and antral follicles with the highest expression in the oocytes. In the testis, expressed in germ cells, type A spermatogonia (SA), primary spermatocytes (S1), round spermatids (S3) and elongated spermatids.

The protein resides in the nucleus. Its subcellular location is the cytoplasm. The protein localises to the stress granule. It localises to the P-body. Its function is as follows. Plays a role in the maintenance of the undifferentiated state of germ cells regulating the spermatogonia cell cycle and inducing a prolonged transit in G1 phase. Affects cell proliferation probably by repressing translation of specific mRNAs. Maintains the germ cell lineage by suppressing both Bax-dependent and -independent apoptotic pathways. Essential in the early stage embryo to protect the migrating primordial germ cells (PGCs) from apoptosis. This is Nanos homolog 3 (NANOS3) from Homo sapiens (Human).